Reading from the N-terminus, the 349-residue chain is MLFKISFLALIASALAMSINSPTNGDTWQTNGEEQITWNVVSTDEPSAALYLTNFAVYPTVTQYLDTVDTSTGSYTTNTTNWPTGQGFQINMAYPGRPEQIYAQSQQFNIVEGAASSSSSSSSSSSSLVSSTTSSSSSATPSTTSSSSSSSSSSSSSSSKSSSSSSKSSSRSSSRTTSHRTTSHKSSSYRPTVFPYTTISHYNITNATNGTYCNGTNGTNFTCIVNASNATNSTFWLNGTNSTNGTNSTNSTSTTSHSLTKLPTSSKSLTTSKTTASGHITKGVMEALSTNDTTNTTDDATNTTSDSSSSSSASASSSSSSSSAASLVSQPVGISAVIAFFAVALSLTL.

The first 16 residues, 1-16, serve as a signal peptide directing secretion; that stretch reads MLFKISFLALIASALA. Residues 17–326 lie on the Lumenal side of the membrane; the sequence is MSINSPTNGD…SSSSSSSAAS (310 aa). Disordered regions lie at residues 115-190 and 243-322; these read ASSS…SSYR and TNGT…SSSS. 3 stretches are compositionally biased toward low complexity: residues 116–176, 243–278, and 289–322; these read SSSS…SSRT, TNGT…TASG, and STND…SSSS. A helical transmembrane segment spans residues 327 to 347; the sequence is LVSQPVGISAVIAFFAVALSL. The Cytoplasmic segment spans residues 348–349; that stretch reads TL.

The protein localises to the endoplasmic reticulum membrane. This is an uncharacterized protein from Schizosaccharomyces pombe (strain 972 / ATCC 24843) (Fission yeast).